Consider the following 95-residue polypeptide: Putative septation protein SpoVG (95 aa).

It belongs to the SpoVG family.

Its function is as follows. Could be involved in septation. This is Putative septation protein SpoVG from Brevibacillus brevis (strain 47 / JCM 6285 / NBRC 100599).